An 884-amino-acid chain; its full sequence is E3 ubiquitin-protein ligase BRE1-like 1 (884 aa).

Positions 1–37 are disordered; sequence MGSTGEPDRKRRLSSSVAPGGGAPVSPAKRLAVAPTS. Residues 49-86 adopt a coiled-coil conformation; sequence YKNQKLSEQLEAHKFEYRALENKFAGLKEKQRTHNETL. A disordered region spans residues 107–127; that stretch reads KSGSPNSSPGSGHNNVQKDGT. The span at 108–121 shows a compositional bias: low complexity; the sequence is SGSPNSSPGSGHNN. Coiled coils occupy residues 216–541, 580–663, 696–762, and 789–827; these read LNNV…ELKL, SKLE…LQQI, RNLQ…QSLD, and KKRI…KEYR. Residues 832-871 form an RING-type zinc finger; it reads CGICHDRQKEVVITKCYHLFCNQCIQKSLGNRQRRCPSCS.

Belongs to the BRE1 family.

The protein resides in the nucleus. It carries out the reaction S-ubiquitinyl-[E2 ubiquitin-conjugating enzyme]-L-cysteine + [acceptor protein]-L-lysine = [E2 ubiquitin-conjugating enzyme]-L-cysteine + N(6)-ubiquitinyl-[acceptor protein]-L-lysine.. It participates in protein modification; protein ubiquitination. E3 ubiquitin-protein ligase that monoubiquitinates H2B to form H2BK143ub1. H2BK143ub1 gives a specific tag for epigenetic transcriptional activation and is also prerequisite for H3K4me and maybe H3K79me. It thereby plays a central role in histone code and gene regulation. Forms a ubiquitin ligase complex in cooperation with the E2 enzyme UBC2/RAD6. This Oryza sativa subsp. indica (Rice) protein is E3 ubiquitin-protein ligase BRE1-like 1 (BRE1A).